Reading from the N-terminus, the 165-residue chain is Nucleotide-binding protein CHY_1197 (165 aa).

It belongs to the YajQ family.

In terms of biological role, nucleotide-binding protein. The chain is Nucleotide-binding protein CHY_1197 from Carboxydothermus hydrogenoformans (strain ATCC BAA-161 / DSM 6008 / Z-2901).